The primary structure comprises 88 residues: Small ribosomal subunit protein bS16c (88 aa).

Belongs to the bacterial ribosomal protein bS16 family.

It is found in the plastid. It localises to the chloroplast. The protein is Small ribosomal subunit protein bS16c of Atropa belladonna (Belladonna).